The primary structure comprises 60 residues: Large ribosomal subunit protein uL30 (60 aa).

The protein belongs to the universal ribosomal protein uL30 family. As to quaternary structure, part of the 50S ribosomal subunit.

The chain is Large ribosomal subunit protein uL30 from Histophilus somni (strain 2336) (Haemophilus somnus).